The chain runs to 307 residues: MRIIFAGTPDFAVPSLRAAAQRHEVVAVYTQPDRPAGRGRGLTPSPVKLEAIARGIPVFQPQTLRSPEALATLRALDADLMVVVAYGLILPKAVLAAPTHGCWNVHASLLPRWRGAAPIQRAIEAGDTETGVCLMQMEAGLDTGPVLLSQRIEIGEQDTGGQLHDRLAALGAQVLSDGLGLLRAGIRPVAQPQPADGVTYAHKLDKAQARLDWAQPAQELARRVRAFNPWPVAEAILAGERVRLHGAVALELAHQQPPGTLLAASKQGIDIACGEGALRVRVLQREGGKAITAADYLNARRDLPALR.

108–111 is a binding site for (6S)-5,6,7,8-tetrahydrofolate; the sequence is SLLP.

The protein belongs to the Fmt family.

The enzyme catalyses L-methionyl-tRNA(fMet) + (6R)-10-formyltetrahydrofolate = N-formyl-L-methionyl-tRNA(fMet) + (6S)-5,6,7,8-tetrahydrofolate + H(+). Functionally, attaches a formyl group to the free amino group of methionyl-tRNA(fMet). The formyl group appears to play a dual role in the initiator identity of N-formylmethionyl-tRNA by promoting its recognition by IF2 and preventing the misappropriation of this tRNA by the elongation apparatus. The protein is Methionyl-tRNA formyltransferase of Xanthomonas axonopodis pv. citri (strain 306).